A 425-amino-acid polypeptide reads, in one-letter code: Proline--tRNA ligase (425 aa).

This sequence belongs to the class-II aminoacyl-tRNA synthetase family. ProS type 2 subfamily. Homodimer.

The protein localises to the cytoplasm. The catalysed reaction is tRNA(Pro) + L-proline + ATP = L-prolyl-tRNA(Pro) + AMP + diphosphate. In terms of biological role, catalyzes the attachment of proline to tRNA(Pro) in a two-step reaction: proline is first activated by ATP to form Pro-AMP and then transferred to the acceptor end of tRNA(Pro). This Anaplasma marginale (strain St. Maries) protein is Proline--tRNA ligase.